Reading from the N-terminus, the 350-residue chain is Flap endonuclease 1 (350 aa).

The tract at residues 1–102 (MGVTALRELI…REIERRQKLK (102 aa)) is N-domain. Mg(2+) is bound by residues aspartate 31, aspartate 84, glutamate 156, glutamate 158, aspartate 177, aspartate 179, and aspartate 240. The segment at 120-261 (EARKYAQMSA…TALRYVKSYG (142 aa)) is I-domain. Positions 339-347 (KQSTLDMFF) are interaction with PCNA.

This sequence belongs to the XPG/RAD2 endonuclease family. FEN1 subfamily. In terms of assembly, interacts with PCNA. PCNA stimulates the nuclease activity without altering cleavage specificity. The cofactor is Mg(2+).

In terms of biological role, structure-specific nuclease with 5'-flap endonuclease and 5'-3' exonuclease activities involved in DNA replication and repair. During DNA replication, cleaves the 5'-overhanging flap structure that is generated by displacement synthesis when DNA polymerase encounters the 5'-end of a downstream Okazaki fragment. Binds the unpaired 3'-DNA end and kinks the DNA to facilitate 5' cleavage specificity. Cleaves one nucleotide into the double-stranded DNA from the junction in flap DNA, leaving a nick for ligation. Also involved in the base excision repair (BER) pathway. Acts as a genome stabilization factor that prevents flaps from equilibrating into structures that lead to duplications and deletions. Also possesses 5'-3' exonuclease activity on nicked or gapped double-stranded DNA. The sequence is that of Flap endonuclease 1 from Ignicoccus hospitalis (strain KIN4/I / DSM 18386 / JCM 14125).